A 295-amino-acid polypeptide reads, in one-letter code: Small ribosomal subunit protein uS2 (295 aa).

This sequence belongs to the universal ribosomal protein uS2 family.

The protein is Small ribosomal subunit protein uS2 of Rickettsia typhi (strain ATCC VR-144 / Wilmington).